The sequence spans 260 residues: UPF0294 protein YE0917 (260 aa).

Belongs to the UPF0294 family.

It is found in the cytoplasm. In Yersinia enterocolitica serotype O:8 / biotype 1B (strain NCTC 13174 / 8081), this protein is UPF0294 protein YE0917.